Reading from the N-terminus, the 294-residue chain is Factor associated with metabolism and energy (294 aa).

The span at 1 to 12 (MGLGHSKAHPRV) shows a compositional bias: basic residues. Disordered stretches follow at residues 1–28 (MGLG…TPST) and 255–279 (FWDS…LVRT). Gly-2 carries the N-myristoyl glycine lipid modification. Positions 17–28 (PLQSQETETPST) are enriched in polar residues. Positions 268–279 (KDERRPQALVRT) are enriched in basic and acidic residues.

In terms of tissue distribution, expressed in proximal tubules of the kidney.

It is found in the cell membrane. Its subcellular location is the cytoplasmic vesicle. In terms of biological role, may be involved in tuning the metabolism, energy expenditure, and excretion processes. In Mus musculus (Mouse), this protein is Factor associated with metabolism and energy.